The primary structure comprises 181 residues: Mitochondrial pyruvate carrier-like protein (181 aa).

2 helical membrane passes run 23–42 (YLAS…PLAA) and 52–74 (IISG…FAYR). Residues 125–154 (TGSVDSSATSTGSVDSSATSTGSVDSSAAT) are disordered.

The protein belongs to the mitochondrial pyruvate carrier (MPC) (TC 2.A.105) family.

It localises to the mitochondrion inner membrane. In terms of biological role, may mediate the uptake of pyruvate into mitochondria. In Bos taurus (Bovine), this protein is Mitochondrial pyruvate carrier-like protein.